Consider the following 702-residue polypeptide: MVKTFEMKLGGRPFVVEIGKVAELAQGSCMIKYGDTTVLVTACASKEPKEGLDFFPLSCDYEEKLYAVGKIPGGFIKRESRPSEKATLTARLIDRPIRPLFPKGYHNDVQVIATVLSMDQDCPPDISAMIGSSIALSVSNIPFMGPTASVSVGMIDGEYIVNPTSKQKEDSTLELIVSGTKNAIMMIEAGANELTEAQILDAIMFAHEEIKKIVAFIENIVSEVGKPKSEVIAKQMDSNLLTEVVIFLDTKLANAIKTFDKTERNENIQAVSAEALDYFEEKYEGRSKEVHDILSMLIKVETRKMITSEGIRPDNRKLDEIRPISTQVGILPRAHGTGLFNRGETQVLTITTLGDLRDAQRIDGIGEEDEKRYMHHYNFPPYSVGETRFMRGPSRREIGHGALVERALLPMIPSKEDFPYAIRLVSEVLTCNGSSSQASVCGSTLSLMDAGVPIKRMVAGIAMGLIKEDDQVVILSDIQGMEDALGDMDLKVAGTEEGITAMQMDIKIAGIDRGIMETALEQARIGRLHILNKMKESITSPRIELSSYAPKVTQIKVHPDKVREVIGAGGKVINKIIDETGCKITIENDGTIYVAAPDQESSRRAVEMIELIVKDPVVGEVYTGKVIKIMDFGAFVEILPGKEGLVHISNLAHERVTKVTDVLAEGDLIEVKLMEINPQGKIGLSRKALLPKPETKSETQSE.

Positions 483 and 489 each coordinate Mg(2+). The KH domain occupies 550–609 (PKVTQIKVHPDKVREVIGAGGKVINKIIDETGCKITIENDGTIYVAAPDQESSRRAVEMI). Residues 619 to 687 (GEVYTGKVIK…PQGKIGLSRK (69 aa)) form the S1 motif domain.

Belongs to the polyribonucleotide nucleotidyltransferase family. It depends on Mg(2+) as a cofactor.

It is found in the cytoplasm. It catalyses the reaction RNA(n+1) + phosphate = RNA(n) + a ribonucleoside 5'-diphosphate. Functionally, involved in mRNA degradation. Catalyzes the phosphorolysis of single-stranded polyribonucleotides processively in the 3'- to 5'-direction. In Alkaliphilus metalliredigens (strain QYMF), this protein is Polyribonucleotide nucleotidyltransferase 3.